A 95-amino-acid polypeptide reads, in one-letter code: Small ribosomal subunit protein bS18 (95 aa).

Belongs to the bacterial ribosomal protein bS18 family. Part of the 30S ribosomal subunit. Forms a tight heterodimer with protein bS6.

Binds as a heterodimer with protein bS6 to the central domain of the 16S rRNA, where it helps stabilize the platform of the 30S subunit. The sequence is that of Small ribosomal subunit protein bS18 from Rickettsia typhi (strain ATCC VR-144 / Wilmington).